The chain runs to 1399 residues: DNA-directed RNA polymerase subunit beta' (1399 aa).

Zn(2+) contacts are provided by Cys-70, Cys-72, Cys-85, and Cys-88. Mg(2+) is bound by residues Asp-460, Asp-462, and Asp-464. Residues Cys-814, Cys-888, Cys-895, and Cys-898 each coordinate Zn(2+).

It belongs to the RNA polymerase beta' chain family. The RNAP catalytic core consists of 2 alpha, 1 beta, 1 beta' and 1 omega subunit. When a sigma factor is associated with the core the holoenzyme is formed, which can initiate transcription. The cofactor is Mg(2+). Zn(2+) serves as cofactor.

It catalyses the reaction RNA(n) + a ribonucleoside 5'-triphosphate = RNA(n+1) + diphosphate. In terms of biological role, DNA-dependent RNA polymerase catalyzes the transcription of DNA into RNA using the four ribonucleoside triphosphates as substrates. The chain is DNA-directed RNA polymerase subunit beta' from Stutzerimonas stutzeri (strain A1501) (Pseudomonas stutzeri).